The primary structure comprises 307 residues: MSIDIEVGTKVTVQVPASSANLGPGYDTLGIALSLYDTVEVEVTRSGLEVEIFGEGAEELPRDGSHLVVKAIRSALKAADVEVTGLRVVCTNNIPQSRGLGSSASAAVAGVAAGNGLAGFPLSEEQVVQLSSAFEGHPDNAAASVLGNAVVSWTTVPVDGRSLPEYRAATLEVHPSIKATALVPDFHASTQAVRRVLPSHVTHADAAFNVSRTAVNVAALTAYPDLLWEGTRDRLHQPYRADVLPVTAEWVNRLRNRGYAAYLSGAGPTVMVLHTEPIEEAILDDAREQNLRVLELEVAGPVSVERG.

95 to 105 (PQSRGLGSSAS) is an ATP binding site.

Belongs to the GHMP kinase family. Homoserine kinase subfamily.

The protein resides in the cytoplasm. The enzyme catalyses L-homoserine + ATP = O-phospho-L-homoserine + ADP + H(+). The protein operates within amino-acid biosynthesis; L-threonine biosynthesis; L-threonine from L-aspartate: step 4/5. Catalyzes the ATP-dependent phosphorylation of L-homoserine to L-homoserine phosphate. This chain is Homoserine kinase, found in Corynebacterium aurimucosum (strain ATCC 700975 / DSM 44827 / CIP 107346 / CN-1) (Corynebacterium nigricans).